The following is a 202-amino-acid chain: Mitochondrial import receptor subunit TOM20-3 (202 aa).

N-acetylmethionine is present on Met-1. Over 1 to 174 (MDTETEFDRI…NKKSSDAKYD (174 aa)) the chain is Cytoplasmic. TPR repeat units follow at residues 38 to 74 (GGVL…DPKK) and 86 to 119 (TSFA…QPDN). The disordered stretch occupies residues 146–166 (SQPMGRVEAPAPPSSKAVKNK). A helical membrane pass occupies residues 175-192 (AMGWVILAIGVVAWISFA). At 193–202 (KANVPVSPPR) the chain is on the mitochondrial intermembrane side.

This sequence belongs to the Tom20 family. Forms part of the preprotein translocase complex of the outer mitochondrial membrane (TOM complex) which consists of at least 6 different proteins (TOM5, TOM6, TOM7, TOM20, TOM22/TOM9 and TOM40). Component of a mitochondrial large protein complex that contains, at least, MIC60, DGS1, TOM40, TOM20 proteins, and petC/RISP. Post-translationally, the N-terminus is blocked. In terms of tissue distribution, expressed in roots, flowers, young cotyledons and leaves.

It is found in the mitochondrion outer membrane. Its function is as follows. Central component of the receptor complex responsible for the recognition and translocation of cytosolically synthesized mitochondrial preproteins. Together with TOM22 functions as the transit peptide receptor at the surface of the mitochondrion outer membrane and facilitates the movement of preproteins into the translocation pore. This Arabidopsis thaliana (Mouse-ear cress) protein is Mitochondrial import receptor subunit TOM20-3.